Reading from the N-terminus, the 213-residue chain is ATP synthase peripheral stalk subunit OSCP, mitochondrial (213 aa).

A mitochondrion-targeting transit peptide spans 1 to 23; that stretch reads MAAPAVSGLSRQVRCFSTSVVRP. Positions 5–23 match the SIFI-degron motif; it reads AVSGLSRQVRCFSTSVVRP. Lysine 54, lysine 60, lysine 70, and lysine 73 each carry N6-acetyllysine. Lysine 90 bears the N6-succinyllysine mark. Lysine 158 and lysine 162 each carry N6-acetyllysine; alternate. Residues lysine 158 and lysine 162 each carry the N6-succinyllysine; alternate modification. Lysine 172, lysine 176, and lysine 192 each carry N6-acetyllysine. Position 199 is an N6-succinyllysine (lysine 199).

This sequence belongs to the ATPase delta chain family. As to quaternary structure, component of the ATP synthase complex composed at least of ATP5F1A/subunit alpha, ATP5F1B/subunit beta, ATP5MC1/subunit c (homooctomer), MT-ATP6/subunit a, MT-ATP8/subunit 8, ATP5ME/subunit e, ATP5MF/subunit f, ATP5MG/subunit g, ATP5MK/subunit k, ATP5MJ/subunit j, ATP5F1C/subunit gamma, ATP5F1D/subunit delta, ATP5F1E/subunit epsilon, ATP5PF/subunit F6, ATP5PB/subunit b, ATP5PD/subunit d, ATP5PO/subunit OSCP. ATP synthase complex consists of a soluble F(1) head domain (subunits alpha(3) and beta(3)) - the catalytic core - and a membrane F(0) domain - the membrane proton channel (subunits c, a, 8, e, f, g, k and j). These two domains are linked by a central stalk (subunits gamma, delta, and epsilon) rotating inside the F1 region and a stationary peripheral stalk (subunits F6, b, d, and OSCP). In terms of processing, acetylation at Lys-162 decreases ATP production. Deacetylated by SIRT3. In response to mitochondrial stress, the precursor protein is ubiquitinated by the SIFI complex in the cytoplasm before mitochondrial import, leading to its degradation. Within the SIFI complex, UBR4 initiates ubiquitin chain that are further elongated or branched by KCMF1.

It localises to the mitochondrion. Its subcellular location is the mitochondrion inner membrane. Functionally, subunit OSCP, of the mitochondrial membrane ATP synthase complex (F(1)F(0) ATP synthase or Complex V) that produces ATP from ADP in the presence of a proton gradient across the membrane which is generated by electron transport complexes of the respiratory chain. ATP synthase complex consist of a soluble F(1) head domain - the catalytic core - and a membrane F(1) domain - the membrane proton channel. These two domains are linked by a central stalk rotating inside the F(1) region and a stationary peripheral stalk. During catalysis, ATP synthesis in the catalytic domain of F(1) is coupled via a rotary mechanism of the central stalk subunits to proton translocation. In vivo, can only synthesize ATP although its ATP hydrolase activity can be activated artificially in vitro. Part of the complex F(0) domain. Part of the complex F(0) domain and the peripheric stalk, which acts as a stator to hold the catalytic alpha(3)beta(3) subcomplex and subunit a/ATP6 static relative to the rotary elements. In Homo sapiens (Human), this protein is ATP synthase peripheral stalk subunit OSCP, mitochondrial.